Reading from the N-terminus, the 273-residue chain is Putative phosphoenolpyruvate synthase regulatory protein (273 aa).

ADP is bound at residue 153–160 (AVSRAGKT).

It belongs to the pyruvate, phosphate/water dikinase regulatory protein family. PSRP subfamily.

The catalysed reaction is [pyruvate, water dikinase] + ADP = [pyruvate, water dikinase]-phosphate + AMP + H(+). It carries out the reaction [pyruvate, water dikinase]-phosphate + phosphate + H(+) = [pyruvate, water dikinase] + diphosphate. Its function is as follows. Bifunctional serine/threonine kinase and phosphorylase involved in the regulation of the phosphoenolpyruvate synthase (PEPS) by catalyzing its phosphorylation/dephosphorylation. The chain is Putative phosphoenolpyruvate synthase regulatory protein from Xanthomonas campestris pv. campestris (strain ATCC 33913 / DSM 3586 / NCPPB 528 / LMG 568 / P 25).